The chain runs to 124 residues: Small ribosomal subunit protein uS12 (124 aa).

The segment at 9–28 is disordered; the sequence is RTERQTLSRKTKSPALRSCP. Asp89 bears the 3-methylthioaspartic acid mark. Residues 104–124 are disordered; that stretch reads TAGVKDRRQSRSKYGAKAPKE.

This sequence belongs to the universal ribosomal protein uS12 family. In terms of assembly, part of the 30S ribosomal subunit. Contacts proteins S8 and S17. May interact with IF1 in the 30S initiation complex.

Functionally, with S4 and S5 plays an important role in translational accuracy. Its function is as follows. Interacts with and stabilizes bases of the 16S rRNA that are involved in tRNA selection in the A site and with the mRNA backbone. Located at the interface of the 30S and 50S subunits, it traverses the body of the 30S subunit contacting proteins on the other side and probably holding the rRNA structure together. The combined cluster of proteins S8, S12 and S17 appears to hold together the shoulder and platform of the 30S subunit. This is Small ribosomal subunit protein uS12 from Synechococcus sp. (strain RCC307).